A 296-amino-acid polypeptide reads, in one-letter code: Uridine phosphorylase A (296 aa).

Phosphate-binding positions include glycine 46, arginine 77, and 121–124; that span reads RLGT. Residues 125–126 and 201–203 contribute to the uridine site; these read SG and QGR.

The protein belongs to the PNP/UDP phosphorylase family. In terms of assembly, homodimer.

It carries out the reaction uridine + phosphate = alpha-D-ribose 1-phosphate + uracil. Its pathway is pyrimidine metabolism; UMP biosynthesis via salvage pathway; uracil from uridine (phosphorylase route): step 1/1. Catalyzes the reversible phosphorylytic cleavage of uridine and deoxyuridine to uracil and ribose- or deoxyribose-1-phosphate. The produced molecules are then utilized as carbon and energy sources or in the rescue of pyrimidine bases for nucleotide synthesis. The chain is Uridine phosphorylase A from Schistosoma mansoni (Blood fluke).